The following is a 204-amino-acid chain: Cytochrome b6 (204 aa).

The helical transmembrane segment at Y23–M43 threads the bilayer. Residue C24 participates in heme c binding. Positions 75 and 89 each coordinate heme b. Transmembrane regions (helical) follow at residues M81–K101, W107–L127, and A136–L157. 2 residues coordinate heme b: H176 and H191. The helical transmembrane segment at T177–K197 threads the bilayer.

It belongs to the cytochrome b family. PetB subfamily. As to quaternary structure, the 4 large subunits of the cytochrome b6-f complex are cytochrome b6, subunit IV (17 kDa polypeptide, PetD), cytochrome f and the Rieske protein, while the 4 small subunits are PetG, PetL, PetM and PetN. The complex functions as a dimer. Requires heme b as cofactor. Heme c is required as a cofactor.

The protein localises to the plastid. It is found in the chloroplast thylakoid membrane. Its function is as follows. Component of the cytochrome b6-f complex, which mediates electron transfer between photosystem II (PSII) and photosystem I (PSI), cyclic electron flow around PSI, and state transitions. In Picea abies (Norway spruce), this protein is Cytochrome b6.